A 429-amino-acid chain; its full sequence is Adenylosuccinate synthetase (429 aa).

Residues 12-18 (GDEGKGK) and 40-42 (GHT) each bind GTP. Residue aspartate 13 is the Proton acceptor of the active site. The Mg(2+) site is built by aspartate 13 and glycine 40. Residues 13–16 (DEGK), 38–41 (NAGH), threonine 128, arginine 142, glutamine 223, threonine 238, and arginine 302 each bind IMP. Histidine 41 serves as the catalytic Proton donor. 298–304 (TVTGRPR) contacts substrate. GTP contacts are provided by residues arginine 304, 330-332 (LLD), and 412-414 (SVG).

This sequence belongs to the adenylosuccinate synthetase family. Homodimer. It depends on Mg(2+) as a cofactor.

It localises to the cytoplasm. It carries out the reaction IMP + L-aspartate + GTP = N(6)-(1,2-dicarboxyethyl)-AMP + GDP + phosphate + 2 H(+). It functions in the pathway purine metabolism; AMP biosynthesis via de novo pathway; AMP from IMP: step 1/2. Its function is as follows. Plays an important role in the de novo pathway of purine nucleotide biosynthesis. Catalyzes the first committed step in the biosynthesis of AMP from IMP. This Lactobacillus helveticus (strain DPC 4571) protein is Adenylosuccinate synthetase.